The chain runs to 126 residues: Glycine cleavage system H protein (126 aa).

Residues T21–K103 enclose the Lipoyl-binding domain. At K62 the chain carries N6-lipoyllysine.

The protein belongs to the GcvH family. The glycine cleavage system is composed of four proteins: P, T, L and H. (R)-lipoate is required as a cofactor.

In terms of biological role, the glycine cleavage system catalyzes the degradation of glycine. The H protein shuttles the methylamine group of glycine from the P protein to the T protein. This Aliivibrio salmonicida (strain LFI1238) (Vibrio salmonicida (strain LFI1238)) protein is Glycine cleavage system H protein.